Here is a 166-residue protein sequence, read N- to C-terminus: NAD(P)H-quinone oxidoreductase subunit I, chloroplastic (166 aa).

4Fe-4S ferredoxin-type domains are found at residues 55–84 (GRIH…VDWK) and 95–124 (LNYS…MTEE). The [4Fe-4S] cluster site is built by Cys64, Cys67, Cys70, Cys74, Cys104, Cys107, Cys110, and Cys114.

The protein belongs to the complex I 23 kDa subunit family. In terms of assembly, NDH is composed of at least 16 different subunits, 5 of which are encoded in the nucleus. Requires [4Fe-4S] cluster as cofactor.

It localises to the plastid. It is found in the chloroplast thylakoid membrane. The catalysed reaction is a plastoquinone + NADH + (n+1) H(+)(in) = a plastoquinol + NAD(+) + n H(+)(out). The enzyme catalyses a plastoquinone + NADPH + (n+1) H(+)(in) = a plastoquinol + NADP(+) + n H(+)(out). NDH shuttles electrons from NAD(P)H:plastoquinone, via FMN and iron-sulfur (Fe-S) centers, to quinones in the photosynthetic chain and possibly in a chloroplast respiratory chain. The immediate electron acceptor for the enzyme in this species is believed to be plastoquinone. Couples the redox reaction to proton translocation, and thus conserves the redox energy in a proton gradient. The chain is NAD(P)H-quinone oxidoreductase subunit I, chloroplastic from Rensonia salvadorica.